We begin with the raw amino-acid sequence, 1090 residues long: Leucine-rich repeat receptor-like serine/threonine-protein kinase RGI4 (1090 aa).

The first 20 residues, 1-20, serve as a signal peptide directing secretion; that stretch reads MPRNPRFCFFLFLLFHSSLF. The Extracellular portion of the chain corresponds to 21 to 702; it reads FSIPCFSIDE…IQTRHRSAVK (682 aa). The LRR 1 repeat unit spans residues 36-59; the sequence is LSWKSQLNISGDALSSWKASESNP. A glycan (N-linked (GlcNAc...) asparagine) is linked at Asn-43. Cys-60 and Cys-67 are oxidised to a cystine. 4 LRR repeats span residues 95–119, 120–143, 145–166, and 168–191; these read IKSLTLLSLTSVNLTGSIPKELGDL, SELEVLDLADNSLSGEIPVDIFKL, KLKILSLNTNNLEGVIPSELGN, and VNLIELTLFDNKLAGEIPRTIGEL. Asn-107 carries N-linked (GlcNAc...) asparagine glycosylation. Short sequence motifs (small peptide recognition) lie at residues 176–177, 198–201, 221–226, and Tyr-249; these read FD, RAGG, and TLGLAE. 7 LRR repeats span residues 216–240, 242–264, 265–288, 289–312, 314–335, 336–360, and 362–386; these read CESLVTLGLAETSLSGRLPASIGNL, KVQTIALYTSLLSGPIPDEIGNC, TELQNLYLYQNSISGSIPVSMGRL, KKLQSLLLWQNNLVGKIPTELGTC, ELFLVDLSENLLTGNIPRSFGN, LPNLQELQLSVNQLSGTIPEELANC, and KLTHLEIDNNQISGEIPPLIGKLTS. N-linked (GlcNAc...) asparagine glycosylation is present at Asn-263. A CLE45 peptide binding motif is present at residues 269-273; that stretch reads NLYLY. The short motif at 271–273 is the Small peptide recognition element; sequence YLY. 2 consecutive short sequence motifs (small peptide recognition) follow at residues 319 to 322 and 341 to 343; these read DLSE and ELQ. N-linked (GlcNAc...) asparagine glycosylation is present at Asn-359. Short sequence motifs (small peptide recognition) lie at residues 389–393 and 415–418; these read MFFAW and DLSY. 11 LRR repeats span residues 408–432, 434–456, 457–480, 481–504, 506–526, 527–550, 551–574, 576–598, 600–622, 623–646, and 647–670; these read CQELQAIDLSYNNLSGSIPNGIFEI, NLTKLLLLSNYLSGFIPPDIGNC, TNLYRLRLNGNRLAGNIPAEIGNL, KNLNFIDISENRLIGNIPPEISGC, SLEFVDLHSNGLTGGLPGTLP, KSLQFIDLSDNSLTGSLPTGIGSL, TELTKLNLAKNRFSGEIPREISSC, SLQLLNLGDNGFTGEIPNELGRI, SLAISLNLSCNHFTGEIPSRFSS, LTNLGTLDVSHNKLAGNLNVLADL, and QNLVSLNISFNEFSGELPNTLFFR. Residues Asn-420 and Asn-434 are each glycosylated (N-linked (GlcNAc...) asparagine). The short motif at 437 to 441 is the Small peptide recognition element; it reads KLLLL. Asn-455 is a glycosylation site (N-linked (GlcNAc...) asparagine). Positions 461 to 463 match the Small peptide recognition motif; the sequence is RLR. A glycan (N-linked (GlcNAc...) asparagine) is linked at Asn-606. Asn-653 carries N-linked (GlcNAc...) asparagine glycosylation. Residues 703 to 723 traverse the membrane as a helical segment; sequence VTMSILVAASVVLVLMAVYTL. Topologically, residues 724 to 1090 are cytoplasmic; that stretch reads VKAQRITGKQ…CSFAYSDESV (367 aa). The 283-residue stretch at 758–1040 folds into the Protein kinase domain; it reads LTSANVIGTG…KDIVAMLKEI (283 aa). ATP contacts are provided by residues 764–772 and Lys-786; that span reads IGTGSSGVV. Residues Tyr-829 and Tyr-869 each carry the phosphotyrosine modification. The Proton acceptor role is filled by Asp-882. Residue Tyr-932 is modified to Phosphotyrosine. The LRR 24 repeat unit spans residues 1037–1060; that stretch reads LKEIRQFDMDRSESDMIKGGKCEK. The disordered stretch occupies residues 1054 to 1079; that stretch reads KGGKCEKWQPQPLPPEKIVSTPRGSS.

The protein belongs to the protein kinase superfamily. Ser/Thr protein kinase family. Self-interacts. Interacts with RGF1; this interaction triggers its phosphorylation and ubiquitination and the formation of heterodimers with SERK1. Post-translationally, autophosphorylated. In terms of processing, phosphorylated and ubiquitinated upon interaction with RGF1, thus leading to activation a subsequent degradation. As to expression, expressed in floers, pollen grains and stipules. Present in roots.

The protein localises to the cell membrane. It catalyses the reaction L-seryl-[protein] + ATP = O-phospho-L-seryl-[protein] + ADP + H(+). It carries out the reaction L-threonyl-[protein] + ATP = O-phospho-L-threonyl-[protein] + ADP + H(+). Receptor with a serine/threonine-protein kinase activity. Together with SKM1, LRR-rich receptor-like kinase (LRR-RLK) required for male fertility by the perception of CLE43 and CLE45 peptides and the transduction of their promoting action in pollen tubes, especially under relatively high temperature (at 30 degrees Celsius), thus conferring tolerance against high temperature probably through the maintenance of mitochondrial activity. Seems to not be involved in the perception of CLE45 peptide in roots. Together with RGI1, RGI2, RGI3, RGI4 and RGI5, acts as receptor of RGF1, a peptide hormone that maintains the postembryonic root stem cell niche by regulating the expression levels and patterns of the transcription factor PLETHORA (PLT). Links RGF1 signal with its downstream components. The sequence is that of Leucine-rich repeat receptor-like serine/threonine-protein kinase RGI4 from Arabidopsis thaliana (Mouse-ear cress).